Here is a 1030-residue protein sequence, read N- to C-terminus: MMS19 nucleotide excision repair protein homolog (1030 aa).

Alanine 2 is modified (N-acetylalanine). Residue lysine 496 is modified to N6-acetyllysine. 4 HEAT repeats span residues 866–904, 908–946, 949–987, and 990–1028; these read QRFF…RLPK, LPEL…EAPQ, SLHV…LPTP, and LPYK…LGSP. Serine 1027 carries the phosphoserine modification.

It belongs to the MET18/MMS19 family. In terms of assembly, component of the CIA complex. In the CIA complex, interacts directly with CIAO2B and CIAO3. Component of the MMXD complex, composed of CIAO1, ERCC2, CIAO2B, MMS19 and SLC25A5. Interacts with CIAO2B; the interaction is direct. Interacts with ERCC2/XPD; the interaction is direct. Interacts with ERCC3/XPB and NCOA3/RAC3. Interacts with RTEL1; the interaction mediates the association of RTEL1 with the CIA complex. Interacts with BRIP1. Interacts with KIF4A; the interaction facilitates the transfer of Fe-S clusters to KIF4A to ensure proper localization of KIF4A to the mitotic machinery components. Interacts with CCDC117; the interaction is indirect. In terms of processing, ubiquitinated; undergoes 'Lys-48'-linked polyubiquitination by MAGEF1-NSMCE1 ubiquitin ligase complex leading to proteasomal degradation. Ubiquitously expressed with higher expression in testis.

The protein resides in the nucleus. It is found in the cytoplasm. The protein localises to the cytoskeleton. It localises to the spindle. Its subcellular location is the microtubule organizing center. The protein resides in the centrosome. Functionally, key component of the cytosolic iron-sulfur protein assembly (CIA) complex, a multiprotein complex that mediates the incorporation of iron-sulfur cluster into apoproteins specifically involved in DNA metabolism and genomic integrity. In the CIA complex, MMS19 acts as an adapter between early-acting CIA components and a subset of cellular target iron-sulfur proteins such as ERCC2/XPD, FANCJ and RTEL1, thereby playing a key role in nucleotide excision repair (NER), homologous recombination-mediated double-strand break DNA repair, DNA replication and RNA polymerase II (POL II) transcription. As part of the mitotic spindle-associated MMXD complex, plays a role in chromosome segregation, probably by facilitating iron-sulfur (Fe-S) cluster assembly into ERCC2/XPD. Together with CIAO2, facilitates the transfer of Fe-S clusters to the motor protein KIF4A, which ensures proper localization of KIF4A to mitotic machinery components to promote the progression of mitosis. Indirectly acts as a transcriptional coactivator of estrogen receptor (ER), via its role in iron-sulfur insertion into some component of the TFIIH-machinery. The chain is MMS19 nucleotide excision repair protein homolog from Homo sapiens (Human).